The following is a 244-amino-acid chain: Cell division protein ZapD (244 aa).

This sequence belongs to the ZapD family. As to quaternary structure, interacts with FtsZ.

Its subcellular location is the cytoplasm. In terms of biological role, cell division factor that enhances FtsZ-ring assembly. Directly interacts with FtsZ and promotes bundling of FtsZ protofilaments, with a reduction in FtsZ GTPase activity. The chain is Cell division protein ZapD from Shewanella sp. (strain MR-7).